The chain runs to 370 residues: Cobalt-precorrin-5B C(1)-methyltransferase (370 aa).

Belongs to the CbiD family.

It carries out the reaction Co-precorrin-5B + S-adenosyl-L-methionine = Co-precorrin-6A + S-adenosyl-L-homocysteine. Its pathway is cofactor biosynthesis; adenosylcobalamin biosynthesis; cob(II)yrinate a,c-diamide from sirohydrochlorin (anaerobic route): step 6/10. Catalyzes the methylation of C-1 in cobalt-precorrin-5B to form cobalt-precorrin-6A. This chain is Cobalt-precorrin-5B C(1)-methyltransferase, found in Trichormus variabilis (strain ATCC 29413 / PCC 7937) (Anabaena variabilis).